Consider the following 681-residue polypeptide: uncharacterized protein (681 aa).

Belongs to the protein kinase superfamily. ADCK protein kinase family.

This is an uncharacterized protein from Synechocystis sp. (strain ATCC 27184 / PCC 6803 / Kazusa).